The chain runs to 141 residues: Neuropeptides CP2 (141 aa).

A signal peptide spans 1–26; it reads MDSRICTSFARLMASALCVSTLLVTA. The tract at residues 75–94 is disordered; sequence KVDMPLPRQRTSSRSSERWA. A Histidine amide modification is found at His-140.

In terms of tissue distribution, neurons.

It is found in the secreted. Its function is as follows. Mediates intrinsic neuromodulation. This Aplysia californica (California sea hare) protein is Neuropeptides CP2 (CP2PP).